Consider the following 213-residue polypeptide: MSKDSDYKRAEKHLSSIDNKWSSLVKKVGPCTLTPHPEHAPYEGIIRAITSQKLSDAATNSIINKFCTQCSDNDEFPTPKQIMETDVETLHECGFSKLKSQEIHIVAEAALNKQIPSKSEIEKMSEEELMESLSKIKGVKRWTIEMYSIFTLGRLDIMPADDSTLKNEAKEFFGLSSKPQTEEVEKLTKPCKPYRTIAAWYLWQIPKLHRKGQ.

15 residues coordinate DNA: K53, L54, S61, H91, G94, S96, K97, K99, E102, K137, G138, K140, T143, S163, and T164.

Belongs to the alkylbase DNA glycosidase AlkA family.

The protein localises to the nucleus. Functionally, alkylbase DNA glycosidase-like protein that shows no DNA glycosylase activity for alkylated bases. The molecular role of mag2 appears to be abasic (AP) site recognition and protection, while possibly facilitating damage signaling by structurally sculpting the DNA substrate. Stimulates AP site binding to mismatch repair protein mutS. The protein is Alkylbase DNA glycosidase-like protein mag2 of Schizosaccharomyces pombe (strain 972 / ATCC 24843) (Fission yeast).